The sequence spans 430 residues: Trigger factor (430 aa).

One can recognise a PPIase FKBP-type domain in the interval 163-248 (GNIAIIDFKG…VKEIKVKEIP (86 aa)).

This sequence belongs to the FKBP-type PPIase family. Tig subfamily.

The protein localises to the cytoplasm. It carries out the reaction [protein]-peptidylproline (omega=180) = [protein]-peptidylproline (omega=0). In terms of biological role, involved in protein export. Acts as a chaperone by maintaining the newly synthesized protein in an open conformation. Functions as a peptidyl-prolyl cis-trans isomerase. In Clostridium kluyveri (strain NBRC 12016), this protein is Trigger factor.